The following is a 439-amino-acid chain: C4-dicarboxylate transport protein (439 aa).

9 helical membrane passes run 9 to 29, 45 to 65, 80 to 100, 150 to 170, 186 to 206, 221 to 241, 291 to 311, 334 to 354, and 357 to 377; these read HLYF…YYLP, MIKM…IAGM, LYFE…INII, GEIL…SAMG, AFFG…FGAM, LGML…VVLG, VVGL…SIYL, ILGV…SGFV, and AATF…ILGI.

It belongs to the dicarboxylate/amino acid:cation symporter (DAACS) (TC 2.A.23) family.

The protein resides in the cell inner membrane. Functionally, responsible for the transport of dicarboxylates such as succinate, fumarate, and malate from the periplasm across the membrane. This chain is C4-dicarboxylate transport protein, found in Geobacter sp. (strain M21).